The sequence spans 491 residues: Putative pentatricopeptide repeat-containing protein At1g02420 (491 aa).

PPR repeat units lie at residues 179–209, 210–244, 245–279, 280–314, 315–349, 350–384, 385–419, and 420–454; these read DTACFNALLRTLCQEKSMTDARNVYHSLKHQ, FQPDLQTFNILLSGWKSSEEAEAFFEEMKGKGLKP, DVVTYNSLIDVYCKDREIEKAYKLIDKMREEEETP, DVITYTTVIGGLGLIGQPDKAREVLKEMKEYGCYP, DVAAYNAAIRNFCIARRLGDADKLVDEMVKKGLSP, NATTYNLFFRVLSLANDLGRSWELYVRMLGNECLP, NTQSCMFLIKMFKRHEKVDMAMRLWEDMVVKGFGS, and YSLVSDVLLDLLCDLAKVEEAEKCLLEMVEKGHRP.

This sequence belongs to the PPR family. P subfamily.

In Arabidopsis thaliana (Mouse-ear cress), this protein is Putative pentatricopeptide repeat-containing protein At1g02420.